A 181-amino-acid chain; its full sequence is NADH-quinone oxidoreductase subunit B (181 aa).

4 residues coordinate [4Fe-4S] cluster: cysteine 60, cysteine 61, cysteine 125, and cysteine 155.

Belongs to the complex I 20 kDa subunit family. In terms of assembly, NDH-1 is composed of 14 different subunits. Subunits NuoB, C, D, E, F, and G constitute the peripheral sector of the complex. It depends on [4Fe-4S] cluster as a cofactor.

Its subcellular location is the cell inner membrane. The enzyme catalyses a quinone + NADH + 5 H(+)(in) = a quinol + NAD(+) + 4 H(+)(out). Functionally, NDH-1 shuttles electrons from NADH, via FMN and iron-sulfur (Fe-S) centers, to quinones in the respiratory chain. Couples the redox reaction to proton translocation (for every two electrons transferred, four hydrogen ions are translocated across the cytoplasmic membrane), and thus conserves the redox energy in a proton gradient. The protein is NADH-quinone oxidoreductase subunit B of Novosphingobium aromaticivorans (strain ATCC 700278 / DSM 12444 / CCUG 56034 / CIP 105152 / NBRC 16084 / F199).